The chain runs to 85 residues: uncharacterized protein (85 aa).

3 consecutive transmembrane segments (helical) span residues 4–24 (LTLC…LGGA), 27–47 (SPWL…LIGE), and 61–81 (RLLL…LYLA).

It is found in the cell membrane. This is an uncharacterized protein from Pseudomonas aeruginosa (strain ATCC 15692 / DSM 22644 / CIP 104116 / JCM 14847 / LMG 12228 / 1C / PRS 101 / PAO1).